The sequence spans 296 residues: 4-hydroxy-tetrahydrodipicolinate synthase (296 aa).

Thr-49 lines the pyruvate pocket. Tyr-137 acts as the Proton donor/acceptor in catalysis. The active-site Schiff-base intermediate with substrate is Lys-166. Ile-208 is a binding site for pyruvate.

The protein belongs to the DapA family. Homotetramer; dimer of dimers.

It localises to the cytoplasm. It carries out the reaction L-aspartate 4-semialdehyde + pyruvate = (2S,4S)-4-hydroxy-2,3,4,5-tetrahydrodipicolinate + H2O + H(+). Its pathway is amino-acid biosynthesis; L-lysine biosynthesis via DAP pathway; (S)-tetrahydrodipicolinate from L-aspartate: step 3/4. In terms of biological role, catalyzes the condensation of (S)-aspartate-beta-semialdehyde [(S)-ASA] and pyruvate to 4-hydroxy-tetrahydrodipicolinate (HTPA). In Chlorobium limicola (strain DSM 245 / NBRC 103803 / 6330), this protein is 4-hydroxy-tetrahydrodipicolinate synthase.